The primary structure comprises 161 residues: Ribonuclease P protein component 2 (161 aa).

This sequence belongs to the eukaryotic/archaeal RNase P protein component 2 family. As to quaternary structure, consists of a catalytic RNA component and at least 4-5 protein subunits.

It localises to the cytoplasm. It carries out the reaction Endonucleolytic cleavage of RNA, removing 5'-extranucleotides from tRNA precursor.. Its function is as follows. Part of ribonuclease P, a protein complex that generates mature tRNA molecules by cleaving their 5'-ends. In Methanopyrus kandleri (strain AV19 / DSM 6324 / JCM 9639 / NBRC 100938), this protein is Ribonuclease P protein component 2.